A 404-amino-acid polypeptide reads, in one-letter code: Tryptophan synthase beta chain (404 aa).

Lys-98 bears the N6-(pyridoxal phosphate)lysine mark.

This sequence belongs to the TrpB family. As to quaternary structure, tetramer of two alpha and two beta chains. Pyridoxal 5'-phosphate serves as cofactor.

The catalysed reaction is (1S,2R)-1-C-(indol-3-yl)glycerol 3-phosphate + L-serine = D-glyceraldehyde 3-phosphate + L-tryptophan + H2O. The protein operates within amino-acid biosynthesis; L-tryptophan biosynthesis; L-tryptophan from chorismate: step 5/5. Its function is as follows. The beta subunit is responsible for the synthesis of L-tryptophan from indole and L-serine. This is Tryptophan synthase beta chain from Rhodopseudomonas palustris (strain BisB5).